We begin with the raw amino-acid sequence, 371 residues long: Chaperone protein DnaJ (371 aa).

Positions 5–69 (EFYDRLGVSK…QKRAAYDQYG (65 aa)) constitute a J domain. A CR-type zinc finger spans residues 127 to 209 (GAEKEVSYNR…CHGTGHEKKT (83 aa)). Zn(2+) is bound by residues C140, C143, C157, C160, C183, C186, C197, and C200. CXXCXGXG motif repeat units follow at residues 140–147 (CHTCSGSG), 157–164 (CQKCHGSG), 183–190 (CDVCQGSG), and 197–204 (CPTCHGTG).

Belongs to the DnaJ family. In terms of assembly, homodimer. Requires Zn(2+) as cofactor.

Its subcellular location is the cytoplasm. Participates actively in the response to hyperosmotic and heat shock by preventing the aggregation of stress-denatured proteins and by disaggregating proteins, also in an autonomous, DnaK-independent fashion. Unfolded proteins bind initially to DnaJ; upon interaction with the DnaJ-bound protein, DnaK hydrolyzes its bound ATP, resulting in the formation of a stable complex. GrpE releases ADP from DnaK; ATP binding to DnaK triggers the release of the substrate protein, thus completing the reaction cycle. Several rounds of ATP-dependent interactions between DnaJ, DnaK and GrpE are required for fully efficient folding. Also involved, together with DnaK and GrpE, in the DNA replication of plasmids through activation of initiation proteins. This chain is Chaperone protein DnaJ, found in Streptococcus agalactiae serotype Ia (strain ATCC 27591 / A909 / CDC SS700).